We begin with the raw amino-acid sequence, 245 residues long: 8-amino-3,8-dideoxy-manno-octulosonate cytidylyltransferase (245 aa).

Belongs to the KdsB family.

Its subcellular location is the cytoplasm. It carries out the reaction 8-amino-3,8-dideoxy-alpha-D-manno-octulosonate + CTP = CMP-8-amino-3,8-dideoxy-alpha-D-manno-oct-2-ulosonate + diphosphate. The protein operates within bacterial outer membrane biogenesis; lipopolysaccharide biosynthesis. Functionally, activates KDO8N (a required 8-carbon sugar) for incorporation into bacterial lipopolysaccharide in the Shewanella genus. The protein is 8-amino-3,8-dideoxy-manno-octulosonate cytidylyltransferase of Shewanella sediminis (strain HAW-EB3).